The chain runs to 246 residues: Ribonuclease 3 (246 aa).

The 126-residue stretch at 20 to 145 (FSKLEKILGF…FVGAIYLDRG (126 aa)) folds into the RNase III domain. E62 contributes to the Mg(2+) binding site. Residue D66 is part of the active site. Mg(2+) is bound by residues N131 and E134. E134 is a catalytic residue. Positions 173-241 (SYKSLLIEWC…SKRGYFVFQS (69 aa)) constitute a DRBM domain.

It belongs to the ribonuclease III family. Homodimer. It depends on Mg(2+) as a cofactor.

It is found in the cytoplasm. It carries out the reaction Endonucleolytic cleavage to 5'-phosphomonoester.. Its function is as follows. Digests double-stranded RNA. Involved in the processing of primary rRNA transcript to yield the immediate precursors to the large and small rRNAs (23S and 16S). Processes some mRNAs, and tRNAs when they are encoded in the rRNA operon. Processes pre-crRNA and tracrRNA of type II CRISPR loci if present in the organism. This is Ribonuclease 3 from Flavobacterium psychrophilum (strain ATCC 49511 / DSM 21280 / CIP 103535 / JIP02/86).